Here is a 261-residue protein sequence, read N- to C-terminus: SURF1-like protein (261 aa).

2 helical membrane-spanning segments follow: residues 17–37 and 223–243; these read LYWALLSVPVVTFGLGTWQIF and LSYIITWYSISAITLAMWVFL.

Belongs to the SURF1 family.

It is found in the mitochondrion inner membrane. Functionally, probably involved in the biogenesis of the COX complex. This is SURF1-like protein from Monosiga brevicollis (Choanoflagellate).